We begin with the raw amino-acid sequence, 209 residues long: ATP phosphoribosyltransferase (209 aa).

It belongs to the ATP phosphoribosyltransferase family. Short subfamily. In terms of assembly, heteromultimer composed of HisG and HisZ subunits.

The protein localises to the cytoplasm. The enzyme catalyses 1-(5-phospho-beta-D-ribosyl)-ATP + diphosphate = 5-phospho-alpha-D-ribose 1-diphosphate + ATP. The protein operates within amino-acid biosynthesis; L-histidine biosynthesis; L-histidine from 5-phospho-alpha-D-ribose 1-diphosphate: step 1/9. In terms of biological role, catalyzes the condensation of ATP and 5-phosphoribose 1-diphosphate to form N'-(5'-phosphoribosyl)-ATP (PR-ATP). Has a crucial role in the pathway because the rate of histidine biosynthesis seems to be controlled primarily by regulation of HisG enzymatic activity. This Sulfurimonas denitrificans (strain ATCC 33889 / DSM 1251) (Thiomicrospira denitrificans (strain ATCC 33889 / DSM 1251)) protein is ATP phosphoribosyltransferase.